Consider the following 243-residue polypeptide: Cell division protein ZipA (243 aa).

Residues 1 to 4 (MSDM) are Periplasmic-facing. Residues 5-25 (AMIRIGILIAGLLLVAAIFLF) form a helical membrane-spanning segment. The Cytoplasmic segment spans residues 26–243 (GRPKKSPQGR…APPLTKSPRW (218 aa)). Positions 30–89 (KSPQGRRVDKGEGQPRERREPVISSEFGAEGDAAERAEGVEQSELNLEGQDASGGNEVGK) are disordered. Basic and acidic residues predominate over residues 35–50 (RRVDKGEGQPRERREP).

The protein belongs to the ZipA family. Interacts with FtsZ via their C-terminal domains.

It localises to the cell inner membrane. Functionally, essential cell division protein that stabilizes the FtsZ protofilaments by cross-linking them and that serves as a cytoplasmic membrane anchor for the Z ring. Also required for the recruitment to the septal ring of downstream cell division proteins. This is Cell division protein ZipA from Xanthomonas axonopodis pv. citri (strain 306).